The primary structure comprises 440 residues: ATP-dependent protease ATPase subunit HslU (440 aa).

ATP-binding positions include Ile18, 60-65 (GVGKTE), Asp252, Glu318, and Arg390.

It belongs to the ClpX chaperone family. HslU subfamily. As to quaternary structure, a double ring-shaped homohexamer of HslV is capped on each side by a ring-shaped HslU homohexamer. The assembly of the HslU/HslV complex is dependent on binding of ATP.

It localises to the cytoplasm. In terms of biological role, ATPase subunit of a proteasome-like degradation complex; this subunit has chaperone activity. The binding of ATP and its subsequent hydrolysis by HslU are essential for unfolding of protein substrates subsequently hydrolyzed by HslV. HslU recognizes the N-terminal part of its protein substrates and unfolds these before they are guided to HslV for hydrolysis. The protein is ATP-dependent protease ATPase subunit HslU of Acidithiobacillus ferrooxidans (strain ATCC 23270 / DSM 14882 / CIP 104768 / NCIMB 8455) (Ferrobacillus ferrooxidans (strain ATCC 23270)).